Here is a 201-residue protein sequence, read N- to C-terminus: Large ribosomal subunit protein uL18 (201 aa).

The protein belongs to the universal ribosomal protein uL18 family. In terms of assembly, part of the 50S ribosomal subunit. Contacts the 5S and 23S rRNAs.

This is one of the proteins that bind and probably mediate the attachment of the 5S RNA into the large ribosomal subunit, where it forms part of the central protuberance. The chain is Large ribosomal subunit protein uL18 from Thermococcus gammatolerans (strain DSM 15229 / JCM 11827 / EJ3).